A 326-amino-acid polypeptide reads, in one-letter code: tRNA uridine(34) hydroxylase (326 aa).

The 95-residue stretch at 123-217 (SDPDVLLVDT…YLEEVKQEES (95 aa)) folds into the Rhodanese domain. The active-site Cysteine persulfide intermediate is Cys-177. The disordered stretch occupies residues 304–326 (VSQVILSRRTEKEDQRQAQNKKA).

The protein belongs to the TrhO family.

The catalysed reaction is uridine(34) in tRNA + AH2 + O2 = 5-hydroxyuridine(34) in tRNA + A + H2O. In terms of biological role, catalyzes oxygen-dependent 5-hydroxyuridine (ho5U) modification at position 34 in tRNAs. This Shewanella sediminis (strain HAW-EB3) protein is tRNA uridine(34) hydroxylase.